Reading from the N-terminus, the 543-residue chain is Hydroxylamine reductase (543 aa).

Residues C5, C8, C17, and C23 each coordinate [4Fe-4S] cluster. Positions 236, 260, 304, 398, 426, 451, 486, and 488 each coordinate hybrid [4Fe-2O-2S] cluster. Position 398 is a cysteine persulfide (C398).

The protein belongs to the HCP family. The cofactor is [4Fe-4S] cluster. Hybrid [4Fe-2O-2S] cluster serves as cofactor.

Its subcellular location is the cytoplasm. The catalysed reaction is A + NH4(+) + H2O = hydroxylamine + AH2 + H(+). Catalyzes the reduction of hydroxylamine to form NH(3) and H(2)O. The sequence is that of Hydroxylamine reductase from Bacteroides thetaiotaomicron (strain ATCC 29148 / DSM 2079 / JCM 5827 / CCUG 10774 / NCTC 10582 / VPI-5482 / E50).